Consider the following 1138-residue polypeptide: Exportin-6-B (1138 aa).

One can recognise an Importin N-terminal domain in the interval 31 to 97 (IESLLNNFAQ…RSSLPKLLLS (67 aa)). Residues 291-307 (SVTTNTTSSVVNGGSSS) show a composition bias toward low complexity. Residues 291–315 (SVTTNTTSSVVNGGSSSPPLHSAAP) are disordered.

This sequence belongs to the exportin family.

Its subcellular location is the nucleus. The protein resides in the cytoplasm. Its function is as follows. Mediates the nuclear export of actin and profilin-actin complexes in somatic cells. Oocyte nuclei lack active actin export. Mediates the nuclear export of actin and profilin-actin complexes in somatic cells. The chain is Exportin-6-B (xpo6-b) from Xenopus laevis (African clawed frog).